Consider the following 906-residue polypeptide: Protein translocase subunit SecA (906 aa).

Residues Gln-86, 104-108 (GEGKT), and Asp-499 each bind ATP. The segment at 862 to 885 (KPVVSRIDPKDRNPDDPTSWGRVS) is disordered. Residues Cys-890, Cys-892, Cys-901, and His-902 each coordinate Zn(2+).

Belongs to the SecA family. Monomer and homodimer. Part of the essential Sec protein translocation apparatus which comprises SecA, SecYEG and auxiliary proteins SecDF-YajC and YidC. Zn(2+) is required as a cofactor.

Its subcellular location is the cell inner membrane. The protein localises to the cytoplasm. The catalysed reaction is ATP + H2O + cellular proteinSide 1 = ADP + phosphate + cellular proteinSide 2.. Its function is as follows. Part of the Sec protein translocase complex. Interacts with the SecYEG preprotein conducting channel. Has a central role in coupling the hydrolysis of ATP to the transfer of proteins into and across the cell membrane, serving both as a receptor for the preprotein-SecB complex and as an ATP-driven molecular motor driving the stepwise translocation of polypeptide chains across the membrane. This chain is Protein translocase subunit SecA, found in Rickettsia massiliae (strain Mtu5).